A 116-amino-acid chain; its full sequence is Putative pterin-4-alpha-carbinolamine dehydratase (116 aa).

This sequence belongs to the pterin-4-alpha-carbinolamine dehydratase family.

The catalysed reaction is (4aS,6R)-4a-hydroxy-L-erythro-5,6,7,8-tetrahydrobiopterin = (6R)-L-erythro-6,7-dihydrobiopterin + H2O. This chain is Putative pterin-4-alpha-carbinolamine dehydratase, found in Xylella fastidiosa (strain M12).